The primary structure comprises 155 residues: Ribosome maturation factor RimP (155 aa).

It belongs to the RimP family.

The protein localises to the cytoplasm. Required for maturation of 30S ribosomal subunits. The polypeptide is Ribosome maturation factor RimP (Prochlorococcus marinus subsp. pastoris (strain CCMP1986 / NIES-2087 / MED4)).